Reading from the N-terminus, the 357-residue chain is tRNA-specific 2-thiouridylase MnmA (357 aa).

ATP contacts are provided by residues Gly-8 to Ser-15 and Ile-34. Cys-96 (nucleophile) is an active-site residue. Cys-96 and Cys-192 form a disulfide bridge. Gly-120 is an ATP binding site. The tract at residues Lys-142–Gln-144 is interaction with tRNA. Cys-192 functions as the Cysteine persulfide intermediate in the catalytic mechanism. Residues Arg-301 to Tyr-302 are interaction with tRNA.

This sequence belongs to the MnmA/TRMU family.

The protein localises to the cytoplasm. It carries out the reaction S-sulfanyl-L-cysteinyl-[protein] + uridine(34) in tRNA + AH2 + ATP = 2-thiouridine(34) in tRNA + L-cysteinyl-[protein] + A + AMP + diphosphate + H(+). Functionally, catalyzes the 2-thiolation of uridine at the wobble position (U34) of tRNA, leading to the formation of s(2)U34. The chain is tRNA-specific 2-thiouridylase MnmA from Chlorobium phaeobacteroides (strain DSM 266 / SMG 266 / 2430).